The chain runs to 355 residues: NADH-quinone oxidoreductase subunit H (355 aa).

8 consecutive transmembrane segments (helical) span residues Ile-25 to Trp-45, Trp-91 to Ile-111, Leu-126 to Ala-146, Met-170 to Val-190, Phe-205 to Ile-225, Gly-252 to Leu-272, Phe-290 to Trp-310, and Val-330 to Leu-350.

It belongs to the complex I subunit 1 family. As to quaternary structure, NDH-1 is composed of 14 different subunits. Subunits NuoA, H, J, K, L, M, N constitute the membrane sector of the complex.

The protein resides in the cell inner membrane. It carries out the reaction a quinone + NADH + 5 H(+)(in) = a quinol + NAD(+) + 4 H(+)(out). In terms of biological role, NDH-1 shuttles electrons from NADH, via FMN and iron-sulfur (Fe-S) centers, to quinones in the respiratory chain. The immediate electron acceptor for the enzyme in this species is believed to be ubiquinone. Couples the redox reaction to proton translocation (for every two electrons transferred, four hydrogen ions are translocated across the cytoplasmic membrane), and thus conserves the redox energy in a proton gradient. This subunit may bind ubiquinone. The protein is NADH-quinone oxidoreductase subunit H of Burkholderia lata (strain ATCC 17760 / DSM 23089 / LMG 22485 / NCIMB 9086 / R18194 / 383).